The primary structure comprises 210 residues: MKKGILGRKHGMTQIFDEKGEVIPVTVIEAGPCVVVQKKTVETDGYNAIQVGFGDVKEKRLTKPLIGHFKKAGVPFKRYLREFRLDDISGYEVGSEIKVDIFKPGDRVNVTGISKGKGFAGVVKRYGANRGPMSHGSKYHRRVGSMSATTDPGRTFKGKIMPGHMGHERVTIQNLEVVKVDPELNLLLVKGSVPGPKGSLLIIKDSVKSK.

A disordered region spans residues 131 to 155 (GPMSHGSKYHRRVGSMSATTDPGRT).

It belongs to the universal ribosomal protein uL3 family. As to quaternary structure, part of the 50S ribosomal subunit. Forms a cluster with proteins L14 and L19.

In terms of biological role, one of the primary rRNA binding proteins, it binds directly near the 3'-end of the 23S rRNA, where it nucleates assembly of the 50S subunit. The chain is Large ribosomal subunit protein uL3 from Thermoanaerobacter sp. (strain X514).